Reading from the N-terminus, the 145-residue chain is Transcriptional regulator ZitR (145 aa).

The 142-residue stretch at 1–142 (MSLANQIDQF…ISQFLSVLTE (142 aa)) folds into the HTH marR-type domain. 4 residues coordinate Zn(2+): E23, C29, E40, and H41. Positions 53-76 (NARIAEQLKISPAAVTKALKKLQE) form a DNA-binding region, H-T-H motif. Residues E106, H107, and H111 each coordinate Zn(2+).

In terms of assembly, homodimer.

Zinc acts as a corepressor and is required for DNA-binding activity. Binds up to two zinc ligands per monomer. Inactive under zinc deprivation. Functionally, zinc-responsive regulator that represses expression of the zit operon in the presence of zinc. Acts by binding two palindromic operator sites overlapping the -35 and -10 boxes of the zit promoter. Could be a sensitive sensor of intracellular zinc to efficiently respond to zinc variations in the environment. The protein is Transcriptional regulator ZitR (zitR) of Lactococcus lactis subsp. cremoris (strain MG1363).